The primary structure comprises 287 residues: Leucine-rich repeat-containing protein 72 (287 aa).

LRR repeat units follow at residues 46–67, 68–89, 90–111, and 112–133; these read DVFE…SRFK, KLKY…TRNY, CLTE…HYLP, and SLHI…VKEL. The LRRCT domain maps to 147-185; it reads NPLCQYNLYRLYIIYHLPGVELLDRNQVTEKERRSMITI.

The protein is Leucine-rich repeat-containing protein 72 (LRRC72) of Homo sapiens (Human).